Here is a 239-residue protein sequence, read N- to C-terminus: Nicotinamide riboside transporter PnuC (239 aa).

Residues Met1–Asp21 lie on the Cytoplasmic side of the membrane. The helical transmembrane segment at Leu22 to Leu42 threads the bilayer. The Periplasmic portion of the chain corresponds to Glu43–Tyr48. A helical transmembrane segment spans residues Phe49–Tyr68. Residues Ala69 to Leu71 lie on the Cytoplasmic side of the membrane. Residues Leu72 to Ser89 form a helical membrane-spanning segment. The Periplasmic portion of the chain corresponds to Arg90–Ala109. The helical transmembrane segment at Met110–Ile127 threads the bilayer. Residues Asp128–Asp157 lie on the Cytoplasmic side of the membrane. Residues Ala158–Met177 traverse the membrane as a helical segment. Over Thr178–Glu183 the chain is Periplasmic. Residues Asn184–Ala206 form a helical membrane-spanning segment. Positions 188 and 192 each coordinate beta-nicotinamide D-riboside. At Met207–Arg239 the chain is on the cytoplasmic side.

It belongs to the nicotinamide ribonucleoside (NR) uptake permease (TC 4.B.1) family.

It is found in the cell inner membrane. Its function is as follows. Required for nicotinamide riboside transport across the inner membrane. The chain is Nicotinamide riboside transporter PnuC (pnuC) from Salmonella typhimurium (strain LT2 / SGSC1412 / ATCC 700720).